Consider the following 700-residue polypeptide: Calpain-2 catalytic subunit (700 aa).

Positions 2-19 (AGMAAALAKERAAAAGAG) are cleaved as a propeptide — anchors to the small subunit. In terms of domain architecture, Calpain catalytic spans 45–344 (LFHDPSFPAG…YSRLEICNLT (300 aa)). Residues glycine 91 and aspartate 96 each contribute to the Ca(2+) site. Cysteine 105 is an active-site residue. Positions 175, 229, and 230 each coordinate Ca(2+). Catalysis depends on residues histidine 262 and asparagine 286. Ca(2+) is bound by residues glutamate 292, aspartate 299, and glutamate 323. The segment at 345 to 514 (PDTLASDRYK…KNANSTVIDD (170 aa)) is domain III. The tract at residues 515–529 (EIEANFEETEIDEDD) is linker. Positions 530-700 (IEPSFKKLFG…LINWLFFTVI (171 aa)) are domain IV. Ca(2+) contacts are provided by alanine 542, aspartate 545, glutamate 547, glutamate 552, aspartate 585, aspartate 587, serine 589, lysine 591, glutamate 596, aspartate 615, aspartate 617, serine 619, threonine 621, glutamate 626, aspartate 658, and asparagine 661. 2 EF-hand domains span residues 572–605 (FSIETCKIMVDLLDNDGSGKLGLKEFHTLWTKIQ) and 602–637 (TKIQKYQKIYREIDVDRSGTMNSYEMRRALEAAGFK). The region spanning 667 to 700 (IRLETLYKMFRKLDTEKTGTIELNLINWLFFTVI) is the EF-hand 3 domain.

This sequence belongs to the peptidase C2 family. As to quaternary structure, forms a heterodimer with a small (regulatory) subunit (CAPNS1). The cofactor is Ca(2+). In terms of tissue distribution, ubiquitous.

It is found in the cytoplasm. The protein localises to the cell membrane. The catalysed reaction is Broad endopeptidase specificity.. Activated by 200-1000 micromolar concentrations of calcium and inhibited by calpastatin. Calcium-regulated non-lysosomal thiol-protease which catalyze limited proteolysis of substrates involved in cytoskeletal remodeling and signal transduction. The protein is Calpain-2 catalytic subunit (CAPN2) of Gallus gallus (Chicken).